The following is a 336-amino-acid chain: tRNA N6-adenosine threonylcarbamoyltransferase (336 aa).

Residues H114 and H118 each coordinate Fe cation. Substrate-binding positions include 136–140, D169, G182, D186, and N275; that span reads LVSGG. Residue D302 coordinates Fe cation.

The protein belongs to the KAE1 / TsaD family. Fe(2+) is required as a cofactor.

The protein localises to the cytoplasm. The catalysed reaction is L-threonylcarbamoyladenylate + adenosine(37) in tRNA = N(6)-L-threonylcarbamoyladenosine(37) in tRNA + AMP + H(+). Its function is as follows. Required for the formation of a threonylcarbamoyl group on adenosine at position 37 (t(6)A37) in tRNAs that read codons beginning with adenine. Is involved in the transfer of the threonylcarbamoyl moiety of threonylcarbamoyl-AMP (TC-AMP) to the N6 group of A37, together with TsaE and TsaB. TsaD likely plays a direct catalytic role in this reaction. The chain is tRNA N6-adenosine threonylcarbamoyltransferase from Streptococcus agalactiae serotype III (strain NEM316).